The primary structure comprises 530 residues: Cytochrome P450 78A6 (530 aa).

Residues 25–45 (LAFSLLAVTIIWLAISLFLWT) form a helical membrane-spanning segment. Cys474 is a heme binding site.

Belongs to the cytochrome P450 family. Heme serves as cofactor. Expressed in leaves, sepals, petals, stamens, carpels and developing ovules.

It is found in the membrane. Its function is as follows. Plays a role in seed and fruit development. Functions probably in association with CYP78A9 in the regulation of seed growth. Acts maternally to promote seed growth. The polypeptide is Cytochrome P450 78A6 (CYP78A6) (Arabidopsis thaliana (Mouse-ear cress)).